The chain runs to 148 residues: Macrodomain Ter protein (148 aa).

Belongs to the MatP family. As to quaternary structure, homodimer.

The protein localises to the cytoplasm. Functionally, required for spatial organization of the terminus region of the chromosome (Ter macrodomain) during the cell cycle. Prevents early segregation of duplicated Ter macrodomains during cell division. Binds specifically to matS, which is a 13 bp signature motif repeated within the Ter macrodomain. This is Macrodomain Ter protein from Pasteurella multocida (strain Pm70).